The chain runs to 556 residues: MAHIVQTHKLTLHDVAIDQALVYSSDSNCAELKRTFQVELAHGYNEVKVQNLPFDLVQDSIRVSGAGEAVIHDVSVKNQEGAEFVIPERVLAIKAIFEEKERAKDKVADSRVAVQKRIEGLDNLITEVAKHGKDGAFHFDGRTIESLNALHGFHQDTTVDLRAQIRTLDQDLRKAEEEYARASQDYDNTGYRWRNSAQYASIIVESEAGGAAQLTITYQVNNVSWTPFYDIRVTAGVEAEMHVTYFGKVRQYSGEDWKTVPLVLSTARPAHGVKQLPKLGALEASIVVPEPECNRGGRGGYGGGYAQDSVVMACAAPMMEMGRSRKSMKMSYAAVKSSNIASEFSIGRPATIDDRTDEYKVNIGQFTLDTKLSNVTVPSRNATAFLVANSVNTSDYPLVAGQASIFLDGAFVNKTEFEDAVVSQKFEVSLGVDPNIRIEYKPVRNYQEQSGTVEKINSQVTEKTTAVTNLRPNSVLLTIREQLPRSTDSRIKVHLNTPEAVEVDEASVEPTVGAAITPEKILDYTVQLAPGQSSTFVVKYTTEHPQAEQIRYEEKF.

At A2 the chain carries N-acetylalanine.

The sequence is that of Protein F37C4.5 from Caenorhabditis elegans.